The following is a 387-amino-acid chain: Succinate--CoA ligase [ADP-forming] subunit beta (387 aa).

In terms of domain architecture, ATP-grasp spans 9–244 (KRLLAEEGVP…STQQDGREIT (236 aa)). Residues lysine 46, 53-55 (GRG), glutamate 99, serine 102, and glutamate 107 contribute to the ATP site. Mg(2+) is bound by residues asparagine 199 and aspartate 213. Substrate-binding positions include asparagine 264 and 321–323 (GIT).

Belongs to the succinate/malate CoA ligase beta subunit family. As to quaternary structure, heterotetramer of two alpha and two beta subunits. Requires Mg(2+) as cofactor.

The enzyme catalyses succinate + ATP + CoA = succinyl-CoA + ADP + phosphate. The catalysed reaction is GTP + succinate + CoA = succinyl-CoA + GDP + phosphate. Its pathway is carbohydrate metabolism; tricarboxylic acid cycle; succinate from succinyl-CoA (ligase route): step 1/1. Functionally, succinyl-CoA synthetase functions in the citric acid cycle (TCA), coupling the hydrolysis of succinyl-CoA to the synthesis of either ATP or GTP and thus represents the only step of substrate-level phosphorylation in the TCA. The beta subunit provides nucleotide specificity of the enzyme and binds the substrate succinate, while the binding sites for coenzyme A and phosphate are found in the alpha subunit. The protein is Succinate--CoA ligase [ADP-forming] subunit beta of Acidithiobacillus ferrooxidans (strain ATCC 23270 / DSM 14882 / CIP 104768 / NCIMB 8455) (Ferrobacillus ferrooxidans (strain ATCC 23270)).